Consider the following 302-residue polypeptide: GTP cyclohydrolase FolE2 (302 aa).

This sequence belongs to the GTP cyclohydrolase IV family.

It catalyses the reaction GTP + H2O = 7,8-dihydroneopterin 3'-triphosphate + formate + H(+). Its pathway is cofactor biosynthesis; 7,8-dihydroneopterin triphosphate biosynthesis; 7,8-dihydroneopterin triphosphate from GTP: step 1/1. Functionally, converts GTP to 7,8-dihydroneopterin triphosphate. This chain is GTP cyclohydrolase FolE2, found in Pseudoalteromonas translucida (strain TAC 125).